Here is a 180-residue protein sequence, read N- to C-terminus: Flavodoxin 2 (180 aa).

The 170-residue stretch at 4-173 (IGLFFGSNTG…RVAAWLAQIA (170 aa)) folds into the Flavodoxin-like domain. FMN is bound by residues 10-15 (SNTGKT), threonine 57, glycine 61, aspartate 99, 106-108 (NYL), and aspartate 155.

FMN serves as cofactor.

Its function is as follows. Flavodoxins are low-potential electron donors to a number of redox enzymes. NifF is the electron donor to nitrogenase, and is thus implicated in nitrogen fixation. Does not function as an electron donor to nitrite reductase. This chain is Flavodoxin 2, found in Azotobacter vinelandii.